A 312-amino-acid polypeptide reads, in one-letter code: uncharacterized protein (312 aa).

The next 10 membrane-spanning stretches (helical) occupy residues 11–31, 46–66, 72–92, 98–118, 128–148, 155–171, 183–203, 221–241, 254–274, and 277–297; these read IAAILYSFIIGLSFLFVKIAL, IAFAAATVPILFGWVKLSIRV, ILPLALLYPALFFSFQAFGLV, EAGIIQAAIPIFTMVFAAYVL, GFTVLSVAGVMFIFVMKGVDV, GSLLILLSALSSAMYNT, TELTYIMSAIGFVVFNAIALV, PGFVLAIVYLGVLSSLVTSFL, MSAFNHVSTIVTMIAGFVILN, and LAWYHLAGAVCIMIGVVGSNI. 2 EamA domains span residues 18 to 142 and 164 to 297; these read FIIG…FIFV and LSSA…GSNI.

The protein belongs to the EamA transporter family.

The protein resides in the cell membrane. This is an uncharacterized protein from Bacillus subtilis (strain 168).